The following is a 617-amino-acid chain: DNA mismatch repair protein MutL (617 aa).

It belongs to the DNA mismatch repair MutL/HexB family.

Its function is as follows. This protein is involved in the repair of mismatches in DNA. It is required for dam-dependent methyl-directed DNA mismatch repair. May act as a 'molecular matchmaker', a protein that promotes the formation of a stable complex between two or more DNA-binding proteins in an ATP-dependent manner without itself being part of a final effector complex. The protein is DNA mismatch repair protein MutL of Christiangramia forsetii (strain DSM 17595 / CGMCC 1.15422 / KT0803) (Gramella forsetii).